A 123-amino-acid chain; its full sequence is Putative membrane protein insertion efficiency factor (123 aa).

Residues 1-23 (MGSCGGKHTGKGAPKPYSRNFTD) form a disordered region.

Belongs to the UPF0161 family.

It localises to the cell inner membrane. In terms of biological role, could be involved in insertion of integral membrane proteins into the membrane. The sequence is that of Putative membrane protein insertion efficiency factor from Brucella ovis (strain ATCC 25840 / 63/290 / NCTC 10512).